Here is a 119-residue protein sequence, read N- to C-terminus: Large ribosomal subunit protein bL17 (119 aa).

Belongs to the bacterial ribosomal protein bL17 family. As to quaternary structure, part of the 50S ribosomal subunit. Contacts protein L32.

This chain is Large ribosomal subunit protein bL17, found in Mesoplasma florum (strain ATCC 33453 / NBRC 100688 / NCTC 11704 / L1) (Acholeplasma florum).